The following is a 352-amino-acid chain: 4-hydroxy-2-oxovalerate aldolase (352 aa).

A Pyruvate carboxyltransferase domain is found at 14–266 (VRMTDTSLRD…KTGIDFFDIA (253 aa)). A substrate-binding site is contributed by 22–23 (RD). Asp23 is a binding site for Mn(2+). Residue His26 is the Proton acceptor of the active site. Substrate is bound by residues Ser176 and His205. 2 residues coordinate Mn(2+): His205 and His207. Residue Tyr296 participates in substrate binding.

Belongs to the 4-hydroxy-2-oxovalerate aldolase family.

It carries out the reaction (S)-4-hydroxy-2-oxopentanoate = acetaldehyde + pyruvate. This Mycolicibacterium gilvum (strain PYR-GCK) (Mycobacterium gilvum (strain PYR-GCK)) protein is 4-hydroxy-2-oxovalerate aldolase.